Reading from the N-terminus, the 745-residue chain is Mitogen-activated protein kinase kinase kinase zak-1 (745 aa).

The Protein kinase domain occupies 31–305 (IQVGDHIGVG…KVMDECEKFM (275 aa)). Residues 37 to 45 (IGVGTFGAV) and Lys63 each bind ATP. Asp159 (proton acceptor) is an active-site residue. Positions 307-352 (LEDWKTEIEKQEKNVEKMRKDLEKRREQLEIREKALKQRMKVEQAV) form a coiled coil. The SAM domain occupies 366–438 (WSEHHTSHWV…MKMIRKLADT (73 aa)). The interval 693–745 (LTRRRRTTTTNSEDTEKSDTNNKTPESQARRVHVHGGKDKWNWKKGKSRPKFT) is disordered. The span at 735-745 (WKKGKSRPKFT) shows a compositional bias: basic residues.

The protein belongs to the protein kinase superfamily. STE Ser/Thr protein kinase family. MAP kinase kinase kinase subfamily. The cofactor is Mg(2+). As to expression, widely expressed; expressed in most tissues, including intestines, muscle and the nervous system.

Its subcellular location is the cytoplasm. It localises to the nucleus. The catalysed reaction is L-seryl-[protein] + ATP = O-phospho-L-seryl-[protein] + ADP + H(+). It carries out the reaction L-threonyl-[protein] + ATP = O-phospho-L-threonyl-[protein] + ADP + H(+). Functionally, stress-activated component of a protein kinase signal transduction cascade that promotes programmed cell death in response to ribotoxic stress. Acts as the proximal sensor of ribotoxic stress: directly binds to the ribosome, thereby acting as a sentinel for colliding ribosomes. Upon ribosome collisions, activates the stress-activated protein kinase signal transduction cascade, leading to programmed cell death. Acts by catalyzing phosphorylation of MAP kinase kinases, leading to activation of the JNK and MAP kinase p38 pathways. The chain is Mitogen-activated protein kinase kinase kinase zak-1 from Caenorhabditis elegans.